The following is a 517-amino-acid chain: MLALLLSPYGAYLGLALLVLYYLLPYLKRAHLRDIPAPGLAAFTNFWLLLQTRRGHRFVVVDNAHKKYGKLVRIAPRHTSIADDGAIQAVYGHGNGFLKSDFYDAFVSIHRGLFNTRDRAEHTRKRKTVSHTFSMKSIGQFEQYIHGNIELFVKQWNRMADTQRNPKTGFASLDALNWFNYLAFDIIGDLAFGAPFGMLDKGKDFAEMRKTPDSPPSYVQAVEVLNRRGEVSATLGCYPALKPFAKYLPDSFFRDGIQAVEDLAGIAVARVNERLRPEVMANNTRVDLLARLMEGKDSNGEKLGRAELTAEALTQLIAGSDTTSNTSCAILYWCMRTPGVIEKLHKVLDEAIPQDVDVPTHAMVKDIPYLQWVIWETMRIHSTSAMGLPREIPAGNPPVTISGHTFYPGDVVSVPSYTIHRSKEIWGPDAEQFVPERWDPARLTPRQKAAFIPFSTGPRACVGRNVAEMELLVICGTVFRLFEFEMQQEGPMETREGFLRKPLGLQVGMKRRQPGSA.

The helical transmembrane segment at 4–24 (LLLSPYGAYLGLALLVLYYLL) threads the bilayer. Residues N282 and N325 are each glycosylated (N-linked (GlcNAc...) asparagine). Residue C461 participates in heme binding.

Belongs to the cytochrome P450 family. It depends on heme as a cofactor.

The protein localises to the membrane. It catalyses the reaction benzoate + reduced [NADPH--hemoprotein reductase] + O2 = 4-hydroxybenzoate + oxidized [NADPH--hemoprotein reductase] + H2O + H(+). In terms of biological role, cytochrome P450 monooxygenase; part of the benzoic acid degradation pathway also known as the protocatechuic acid pathway. Benzoic acid debradation begins with the conversion of benzoic acid into 4-hydroxybenzoic acid through hydroxylation by the benzoate-4-monooxygenase bphA, and its partner NADPH-cytochrome P450 reductase cprA which act as a mediator in electron donation from NADPH. 4-Hydroxybenzoic acid is then converted into 3,4-dihydroxybenzoic acid (also called protocatechuic acid) by the p-hydroxybenzoate-m-hydroxylase phhA. Protocatechuic acid is converted into 3-carboxy-cis,cis-muconic acid by the intradiol ring-cleavage dioxygenase prcA, which is further metabolized through the 3-oxoadipate pathway to finally enter the tricarboxylic acid cycle (TCA). The chain is Benzoate 4-monooxygenase bphA from Aspergillus niger (strain ATCC MYA-4892 / CBS 513.88 / FGSC A1513).